We begin with the raw amino-acid sequence, 240 residues long: Protein CDV3 homolog A (240 aa).

Positions 1–15 (MAEPQEKSLDDFFAK) are enriched in basic and acidic residues. A disordered region spans residues 1–204 (MAEPQEKSLD…TESRREKEME (204 aa)). At alanine 2 the chain carries N-acetylalanine. A compositionally biased stretch (low complexity) spans 27–52 (SGSAAGSRGSARPPDGAPSSSSSMSG). The segment covering 57–73 (VKKEKSGKSDNPDQLQE) has biased composition (basic and acidic residues). Composition is skewed to polar residues over residues 127–141 (DKSSGPWNKTSQAQA) and 181–192 (SDTQFPSLQATA). Residues 193–204 (KHTESRREKEME) show a composition bias toward basic and acidic residues.

This sequence belongs to the CDV3 family.

It localises to the cytoplasm. This is Protein CDV3 homolog A (cdv3-a) from Xenopus laevis (African clawed frog).